A 534-amino-acid chain; its full sequence is GMP synthase [glutamine-hydrolyzing] (534 aa).

Residues 4–202 (KILILDFGSQ…VLEIAKAQPD (199 aa)) form the Glutamine amidotransferase type-1 domain. The Nucleophile role is filled by Cys-81. Active-site residues include His-176 and Glu-178. The GMPS ATP-PPase domain maps to 203–402 (WVMKDHVAEA…LGLPHDMVYR (200 aa)). 230 to 236 (SGGVDSS) serves as a coordination point for ATP.

As to quaternary structure, homodimer.

It carries out the reaction XMP + L-glutamine + ATP + H2O = GMP + L-glutamate + AMP + diphosphate + 2 H(+). It functions in the pathway purine metabolism; GMP biosynthesis; GMP from XMP (L-Gln route): step 1/1. In terms of biological role, catalyzes the synthesis of GMP from XMP. The chain is GMP synthase [glutamine-hydrolyzing] from Methylibium petroleiphilum (strain ATCC BAA-1232 / LMG 22953 / PM1).